A 25-amino-acid chain; its full sequence is Omega conotoxin-CVIF (25 aa).

3 cysteine pairs are disulfide-bonded: Cys-1–Cys-16, Cys-8–Cys-20, and Cys-15–Cys-25. Cysteine amide is present on Cys-25.

Belongs to the conotoxin O1 superfamily. In terms of tissue distribution, expressed by the venom duct.

It localises to the secreted. Functionally, omega-conotoxins act at presynaptic membranes, they bind and block voltage-gated calcium channels. This toxin blocks N-type calcium channels (Cav2.2/CACNA1B). It shows a higher potency when Cav2.2/CACNA1B is only expressed with the ancillary subunit CACNB3 (IC(50)=0.1 nM) than on Cav2.2/CACNA1B expressed with the ancillary subunits CACNA2D1 and CACNB3 (IC(50)=19.9 nM). The Cav2.2/CACNA1B block by this toxin is voltage-independent, whereas the recovery from toxin block is voltage-dependent. There is a low recovery at physiological membrane potential and a high recovery with hyperpolarized potential. This indicates that the toxin has a higher affinity for Cav2.2/CACNA1B in the inactivated state. It is noteworthy that ancillary subunits beta modulate recovery from this toxin block. Cav2.2/CACNA1B expressed with the ancillary subunit CACNB2a (isoform 2a) almost recover completely from this toxin block, whereas an expression with CACNB3 exhibits relatively weak recovery. Inhibition by this toxin of excitatory synaptic transmission is reversible. In vivo, when tested on rat model of persistent pain, this toxin blocks chronic pain behavior. The sequence is that of Omega conotoxin-CVIF from Conus catus (Cat cone).